Consider the following 286-residue polypeptide: 4-hydroxy-tetrahydrodipicolinate synthase 2 (286 aa).

Residue threonine 45 participates in pyruvate binding. Tyrosine 133 functions as the Proton donor/acceptor in the catalytic mechanism. Lysine 161 serves as the catalytic Schiff-base intermediate with substrate. Isoleucine 203 provides a ligand contact to pyruvate.

The protein belongs to the DapA family. As to quaternary structure, homotetramer; dimer of dimers.

The protein resides in the cytoplasm. The catalysed reaction is L-aspartate 4-semialdehyde + pyruvate = (2S,4S)-4-hydroxy-2,3,4,5-tetrahydrodipicolinate + H2O + H(+). It functions in the pathway amino-acid biosynthesis; L-lysine biosynthesis via DAP pathway; (S)-tetrahydrodipicolinate from L-aspartate: step 3/4. Functionally, catalyzes the condensation of (S)-aspartate-beta-semialdehyde [(S)-ASA] and pyruvate to 4-hydroxy-tetrahydrodipicolinate (HTPA). This Clostridium acetobutylicum (strain ATCC 824 / DSM 792 / JCM 1419 / IAM 19013 / LMG 5710 / NBRC 13948 / NRRL B-527 / VKM B-1787 / 2291 / W) protein is 4-hydroxy-tetrahydrodipicolinate synthase 2.